The sequence spans 419 residues: CinA-like protein (419 aa).

It belongs to the CinA family.

The chain is CinA-like protein from Parasynechococcus marenigrum (strain WH8102).